Reading from the N-terminus, the 174-residue chain is N5-carboxyaminoimidazole ribonucleotide mutase (174 aa).

Substrate contacts are provided by Ser-16, Asp-19, and Arg-46.

Belongs to the AIR carboxylase family. Class I subfamily.

The enzyme catalyses 5-carboxyamino-1-(5-phospho-D-ribosyl)imidazole + H(+) = 5-amino-1-(5-phospho-D-ribosyl)imidazole-4-carboxylate. It functions in the pathway purine metabolism; IMP biosynthesis via de novo pathway; 5-amino-1-(5-phospho-D-ribosyl)imidazole-4-carboxylate from 5-amino-1-(5-phospho-D-ribosyl)imidazole (N5-CAIR route): step 2/2. In terms of biological role, catalyzes the conversion of N5-carboxyaminoimidazole ribonucleotide (N5-CAIR) to 4-carboxy-5-aminoimidazole ribonucleotide (CAIR). The sequence is that of N5-carboxyaminoimidazole ribonucleotide mutase from Mycobacterium tuberculosis (strain CDC 1551 / Oshkosh).